Here is an 852-residue protein sequence, read N- to C-terminus: Bifunctional uridylyltransferase/uridylyl-removing enzyme (852 aa).

The tract at residues 1-318 (MPANLSSALE…SAPMRVTLRI (318 aa)) is uridylyltransferase. The interval 319–672 (DDDYIQVNNQ…SRILFKSDSF (354 aa)) is uridylyl-removing. Residues 436–558 (VDDHILTVVR…VQTHERLSAL (123 aa)) form the HD domain. ACT domains follow at residues 673–757 (QVMV…SHSR) and 785–852 (SVEI…EQLS).

Belongs to the GlnD family. Mg(2+) is required as a cofactor.

The enzyme catalyses [protein-PII]-L-tyrosine + UTP = [protein-PII]-uridylyl-L-tyrosine + diphosphate. It catalyses the reaction [protein-PII]-uridylyl-L-tyrosine + H2O = [protein-PII]-L-tyrosine + UMP + H(+). Its activity is regulated as follows. Uridylyltransferase (UTase) activity is inhibited by glutamine, while glutamine activates uridylyl-removing (UR) activity. In terms of biological role, modifies, by uridylylation and deuridylylation, the PII regulatory proteins (GlnB and homologs), in response to the nitrogen status of the cell that GlnD senses through the glutamine level. Under low glutamine levels, catalyzes the conversion of the PII proteins and UTP to PII-UMP and PPi, while under higher glutamine levels, GlnD hydrolyzes PII-UMP to PII and UMP (deuridylylation). Thus, controls uridylylation state and activity of the PII proteins, and plays an important role in the regulation of nitrogen assimilation and metabolism. This is Bifunctional uridylyltransferase/uridylyl-removing enzyme from Neisseria meningitidis serogroup A / serotype 4A (strain DSM 15465 / Z2491).